Reading from the N-terminus, the 120-residue chain is MAMENDELKNLFTSALRRIIGKGISKKYKTLIEKAQKKRDTAPYGEKPDAVKTHLRDMIILPSMIGCVIGVYQGKDYVSVEIKPEMVGMKLSDFSLTYRPVKHGKPSIGATSSSGFVPLK.

The protein belongs to the universal ribosomal protein uS19 family.

The sequence is that of Small ribosomal subunit protein uS19 (RPS15) from Naegleria gruberi (Amoeba).